We begin with the raw amino-acid sequence, 610 residues long: UvrABC system protein C (610 aa).

In terms of domain architecture, GIY-YIG spans 16–94; that stretch reads SQPGVYRMYD…IKLYQPRYNV (79 aa). Residues 204-239 form the UVR domain; the sequence is DQVLTQLIARMEKASQDLAFEEAARIRDQIQAVRRV.

The protein belongs to the UvrC family. In terms of assembly, interacts with UvrB in an incision complex.

The protein localises to the cytoplasm. The UvrABC repair system catalyzes the recognition and processing of DNA lesions. UvrC both incises the 5' and 3' sides of the lesion. The N-terminal half is responsible for the 3' incision and the C-terminal half is responsible for the 5' incision. The chain is UvrABC system protein C from Salmonella typhi.